The sequence spans 91 residues: Acyl-CoA-binding domain-containing protein 1 (91 aa).

In terms of domain architecture, ACB spans 3–88 (LQEDFEQYAE…VKQLLEEAAA (86 aa)). An acyl-CoA is bound by residues Lys15, 30-34 (YGLYK), Lys56, and Tyr75.

It belongs to the ACBP family. As to expression, highly expressed in leaves. Expressed at low levels in roots and seeds.

The protein resides in the cytoplasm. It localises to the cytosol. Functionally, binds medium- and long-chain acyl-CoA esters with high affinity. Can interact in vitro with palmitoyl-CoA, oleoyl-CoA, linoleoyl-CoA and linolenoyl-CoA. Binds phosphatidic acid (PA) and phosphatidylcholine (PC) in vitro. May play a role in the biosynthesis of phospholipids. This is Acyl-CoA-binding domain-containing protein 1 from Oryza sativa subsp. japonica (Rice).